Reading from the N-terminus, the 75-residue chain is RNA-binding protein KhpA (75 aa).

A KH domain is found at Lys-29–Arg-75.

The protein belongs to the KhpA RNA-binding protein family. Forms a complex with KhpB.

Its subcellular location is the cytoplasm. Functionally, a probable RNA chaperone. Forms a complex with KhpB which binds to cellular RNA and controls its expression. Plays a role in peptidoglycan (PG) homeostasis and cell length regulation. The polypeptide is RNA-binding protein KhpA (Thermotoga maritima (strain ATCC 43589 / DSM 3109 / JCM 10099 / NBRC 100826 / MSB8)).